The primary structure comprises 726 residues: Catalase-peroxidase (726 aa).

The segment at 1–33 is disordered; it reads MSTSDDIHNTTATGKCPFHQGGHDQSAGAGTTT. A cross-link (tryptophyl-tyrosyl-methioninium (Trp-Tyr) (with M-252)) is located at residues 105-226; that stretch reads WHGAGTYRSI…LGATEMGLIY (122 aa). His-106 (proton acceptor) is an active-site residue. Residues 226 to 252 constitute a cross-link (tryptophyl-tyrosyl-methioninium (Tyr-Met) (with W-105)); sequence YVNPEGPDHSGEPLSAAAAIRATFGNM. Position 267 (His-267) interacts with heme b.

Belongs to the peroxidase family. Peroxidase/catalase subfamily. In terms of assembly, homodimer or homotetramer. Heme b is required as a cofactor. Formation of the three residue Trp-Tyr-Met cross-link is important for the catalase, but not the peroxidase activity of the enzyme.

The catalysed reaction is H2O2 + AH2 = A + 2 H2O. It catalyses the reaction 2 H2O2 = O2 + 2 H2O. Its function is as follows. Bifunctional enzyme with both catalase and broad-spectrum peroxidase activity. The polypeptide is Catalase-peroxidase (Shigella boydii serotype 18 (strain CDC 3083-94 / BS512)).